Reading from the N-terminus, the 494-residue chain is Guanosine-5'-triphosphate,3'-diphosphate pyrophosphatase (494 aa).

It belongs to the GppA/Ppx family. GppA subfamily.

It catalyses the reaction guanosine 3'-diphosphate 5'-triphosphate + H2O = guanosine 3',5'-bis(diphosphate) + phosphate + H(+). The protein operates within purine metabolism; ppGpp biosynthesis; ppGpp from GTP: step 2/2. Its function is as follows. Catalyzes the conversion of pppGpp to ppGpp. Guanosine pentaphosphate (pppGpp) is a cytoplasmic signaling molecule which together with ppGpp controls the 'stringent response', an adaptive process that allows bacteria to respond to amino acid starvation, resulting in the coordinated regulation of numerous cellular activities. This chain is Guanosine-5'-triphosphate,3'-diphosphate pyrophosphatase, found in Escherichia coli O6:H1 (strain CFT073 / ATCC 700928 / UPEC).